Consider the following 577-residue polypeptide: Probable cytochrome c biosynthesis protein (577 aa).

The protein belongs to the CcmF/CycK/Ccl1/NrfE/CcsA family.

The protein localises to the mitochondrion. Could be involved in assembly and maturation of cytochromes c. May play a role in guidance of apocytochromes and heme groups for the covalent linkage introduced by the cytochrome-c-heme lyase. The polypeptide is Probable cytochrome c biosynthesis protein (Oenothera berteroana (Bertero's evening primrose)).